The chain runs to 124 residues: NADH-quinone oxidoreductase subunit K (124 aa).

3 helical membrane passes run 28–48 (MEHGLILAAIIFAIGLCGVMV), 52–72 (FLFMLMSLEIMMSAAGLAFIV), and 84–104 (IMFIFILTLAAAEASLGLAIL).

The protein belongs to the complex I subunit 4L family. In terms of assembly, NDH-1 is composed of 14 different subunits. Subunits NuoA, H, J, K, L, M, N constitute the membrane sector of the complex.

It localises to the cell inner membrane. It catalyses the reaction a quinone + NADH + 5 H(+)(in) = a quinol + NAD(+) + 4 H(+)(out). Functionally, NDH-1 shuttles electrons from NADH, via FMN and iron-sulfur (Fe-S) centers, to quinones in the respiratory chain. The immediate electron acceptor for the enzyme in this species is believed to be ubiquinone. Couples the redox reaction to proton translocation (for every two electrons transferred, four hydrogen ions are translocated across the cytoplasmic membrane), and thus conserves the redox energy in a proton gradient. In Psychrobacter sp. (strain PRwf-1), this protein is NADH-quinone oxidoreductase subunit K.